Here is a 146-residue protein sequence, read N- to C-terminus: Small ribosomal subunit protein uS15 (146 aa).

Belongs to the universal ribosomal protein uS15 family. Part of the 30S ribosomal subunit.

This is Small ribosomal subunit protein uS15 from Picrophilus torridus (strain ATCC 700027 / DSM 9790 / JCM 10055 / NBRC 100828 / KAW 2/3).